The sequence spans 350 residues: Cytosolic Fe-S cluster assembly factor NBP35 (350 aa).

Residues 1–30 (MENGDIPEDANEHCPGPQSESAGKSDSCAG) form a disordered region. [4Fe-4S] cluster-binding residues include C14, C28, C31, and C37. 67-74 (GKGGVGKS) contributes to the ATP binding site.

This sequence belongs to the Mrp/NBP35 ATP-binding proteins family. NUBP1/NBP35 subfamily. In terms of assembly, homodimer and homotetramer. Predominantly homodimeric. [4Fe-4S] cluster is required as a cofactor.

It is found in the cytoplasm. Its function is as follows. Component of the cytosolic iron-sulfur (Fe-S) protein assembly (CIA) machinery. Required for maturation of extramitochondrial Fe-S proteins. Functions as a Fe-S scaffold, mediating the de novo assembly of an Fe-S cluster and its transfer to target apoproteins. Essential for embryo development. The polypeptide is Cytosolic Fe-S cluster assembly factor NBP35 (Arabidopsis thaliana (Mouse-ear cress)).